A 101-amino-acid polypeptide reads, in one-letter code: Small ribosomal subunit protein uS14A (101 aa).

This sequence belongs to the universal ribosomal protein uS14 family. Part of the 30S ribosomal subunit. Contacts proteins S3 and S10.

In terms of biological role, binds 16S rRNA, required for the assembly of 30S particles and may also be responsible for determining the conformation of the 16S rRNA at the A site. The protein is Small ribosomal subunit protein uS14A of Salinispora tropica (strain ATCC BAA-916 / DSM 44818 / JCM 13857 / NBRC 105044 / CNB-440).